A 452-amino-acid chain; its full sequence is Solute carrier family 52, riboflavin transporter, member 3-B (452 aa).

5 consecutive transmembrane segments (helical) span residues 11 to 31, 38 to 58, 73 to 93, 111 to 131, and 138 to 158; these read LFGI…PLIV, WLLP…PLFI, PVIY…AFLW, LSFL…PFMM, and LTTY…VALV. N-linked (GlcNAc...) asparagine glycosylation is found at Asn-168, Asn-174, Asn-179, and Asn-193. 6 helical membrane passes run 199–219, 285–305, 321–341, 344–364, 381–401, and 412–432; these read FFLF…LLNL, VFIF…LPSV, AATL…FVPI, LVLM…IMAM, ALIV…KVII, and ALVW…LSMF.

This sequence belongs to the riboflavin transporter family.

It localises to the cell membrane. It catalyses the reaction riboflavin(in) = riboflavin(out). In terms of biological role, plasma membrane transporter mediating the uptake by cells of the water soluble vitamin B2/riboflavin that plays a key role in biochemical oxidation-reduction reactions of the carbohydrate, lipid, and amino acid metabolism. The chain is Solute carrier family 52, riboflavin transporter, member 3-B (slc52a3b) from Danio rerio (Zebrafish).